Reading from the N-terminus, the 345-residue chain is Ferrochelatase (345 aa).

H215 and E296 together coordinate Fe cation.

The protein belongs to the ferrochelatase family.

It is found in the cytoplasm. The catalysed reaction is heme b + 2 H(+) = protoporphyrin IX + Fe(2+). It functions in the pathway porphyrin-containing compound metabolism; protoheme biosynthesis; protoheme from protoporphyrin-IX: step 1/1. Its function is as follows. Catalyzes the ferrous insertion into protoporphyrin IX. The chain is Ferrochelatase from Rhodopseudomonas palustris (strain BisB5).